Consider the following 955-residue polypeptide: uncharacterized protein (955 aa).

One can recognise an Importin N-terminal domain in the interval 23-90 (ANNYLEEFQK…RNSLLQLFLA (68 aa)).

This is an uncharacterized protein from Schizosaccharomyces pombe (strain 972 / ATCC 24843) (Fission yeast).